A 118-amino-acid chain; its full sequence is Small ribosomal subunit protein uS13 (118 aa).

The segment at 94 to 118 (SLPLRGQRTKTNARTRKGPRKPIKR) is disordered.

The protein belongs to the universal ribosomal protein uS13 family. As to quaternary structure, part of the 30S ribosomal subunit. Forms a loose heterodimer with protein S19. Forms two bridges to the 50S subunit in the 70S ribosome.

Its function is as follows. Located at the top of the head of the 30S subunit, it contacts several helices of the 16S rRNA. In the 70S ribosome it contacts the 23S rRNA (bridge B1a) and protein L5 of the 50S subunit (bridge B1b), connecting the 2 subunits; these bridges are implicated in subunit movement. Contacts the tRNAs in the A and P-sites. The sequence is that of Small ribosomal subunit protein uS13 from Pseudoalteromonas translucida (strain TAC 125).